Consider the following 223-residue polypeptide: Voltage-dependent calcium channel gamma-1 subunit (223 aa).

Topologically, residues 1–10 (MSQTKTAKVR) are cytoplasmic. The helical transmembrane segment at 11–29 (VTLFFILVGGVLAMVAVVT) threads the bilayer. The Extracellular segment spans residues 30-109 (DHWAVLSPHL…TQKEYSISAA (80 aa)). Residues Asn43 and Asn80 are each glycosylated (N-linked (GlcNAc...) asparagine). Cys57 and Cys81 are disulfide-bonded. The helical transmembrane segment at 110–130 (AIAIFSLGFIIVGSICAFLSF) threads the bilayer. Residues 131–135 (GNKRD) are Cytoplasmic-facing. Residues 136–156 (YLLRPASMFYAFAGLCLIVSV) traverse the membrane as a helical segment. At 157 to 180 (EVMRQSVKRMIDSEDTVWIEHYYS) the chain is on the extracellular side. The chain crosses the membrane as a helical span at residues 181–205 (WSFACACAAFILLFLGGLFLLLFSL). The Cytoplasmic portion of the chain corresponds to 206 to 223 (PRMPQNPWESCMDAEPEH).

It belongs to the PMP-22/EMP/MP20 family. CACNG subfamily. In terms of assembly, component of a calcium channel complex consisting of a pore-forming alpha subunit (CACNA1S) and the ancillary subunits CACNB1 or CACNB2, CACNG1 and CACNA2D1. The channel complex contains alpha, beta, gamma and delta subunits in a 1:1:1:1 ratio, i.e. it contains either CACNB1 or CACNB2. Post-translationally, N-glycosylated. Detected in skeletal muscle (at protein level).

It is found in the cell membrane. The protein resides in the sarcolemma. Regulatory subunit of the voltage-gated calcium channel that gives rise to L-type calcium currents in skeletal muscle. Regulates channel inactivation kinetics. In Mus musculus (Mouse), this protein is Voltage-dependent calcium channel gamma-1 subunit (Cacng1).